Here is a 781-residue protein sequence, read N- to C-terminus: DNA translocase FtsK 2 (781 aa).

The next 4 helical transmembrane spans lie at 24–44, 74–94, 120–140, and 170–190; these read LLGE…LTIL, FADV…LLLL, AGVT…LEAI, and GFTG…SLFF. At 191–781 the chain is on the cytoplasmic side; sequence HFSWLNLAEQ…NRNGNVVEEE (591 aa). The 210-residue stretch at 414–623 folds into the FtsK domain; sequence GKPVVADLAK…FQVSSKIDSR (210 aa). 434-439 contributes to the ATP binding site; that stretch reads GSGKSV.

It belongs to the FtsK/SpoIIIE/SftA family. Homohexamer. Forms a ring that surrounds DNA.

The protein localises to the cell inner membrane. Its function is as follows. Essential cell division protein that coordinates cell division and chromosome segregation. The N-terminus is involved in assembly of the cell-division machinery. The C-terminus functions as a DNA motor that moves dsDNA in an ATP-dependent manner towards the dif recombination site, which is located within the replication terminus region. Translocation stops specifically at Xer-dif sites, where FtsK interacts with the Xer recombinase, allowing activation of chromosome unlinking by recombination. FtsK orienting polar sequences (KOPS) guide the direction of DNA translocation. FtsK can remove proteins from DNA as it translocates, but translocation stops specifically at XerCD-dif site, thereby preventing removal of XerC and XerD from dif. The polypeptide is DNA translocase FtsK 2 (ftsK2) (Ralstonia nicotianae (strain ATCC BAA-1114 / GMI1000) (Ralstonia solanacearum)).